The chain runs to 398 residues: MIDIDRQLEHIKRGCAELIDEGELRKKLERGTPLRIKAGFDPTAPDLHLGHTVLIHKLRHFQELGHTVIFLIGDFTGLIGDPSGRSDTRPPLTREQVLANAETYKQQVFKILDPEKTVVDFNSRWMGEFGAADFIRLASRYTVARMMERDDFEKRYKEGRPIAVHEFLYPLVQGYDSVALKADVELGGTDQKFNLLVGRHLQSQYGQEPQCILTMPLLEGLDGVKKMSKSLGNYVGIDESPADMFGKLMSVSDELMWRYFELISSRSLDEIADLRRKVETGEAHPKLVKESLAYELTTRYHGEDKAAEAQQGFNAVFAGGGVPDDAPVHACDHGDDSTPPAFLEAAGLVKSRGEAKRLIKEGALSVDGVRCDDANSPLASGEYVIKLGKKRFLRLTVR.

The 'HIGH' region motif lies at proline 42–histidine 51. Residues lysine 226–serine 230 carry the 'KMSKS' region motif. Lysine 229 serves as a coordination point for ATP. The 57-residue stretch at alanine 341 to valine 397 folds into the S4 RNA-binding domain.

The protein belongs to the class-I aminoacyl-tRNA synthetase family. TyrS type 2 subfamily. In terms of assembly, homodimer.

It is found in the cytoplasm. It catalyses the reaction tRNA(Tyr) + L-tyrosine + ATP = L-tyrosyl-tRNA(Tyr) + AMP + diphosphate + H(+). Functionally, catalyzes the attachment of tyrosine to tRNA(Tyr) in a two-step reaction: tyrosine is first activated by ATP to form Tyr-AMP and then transferred to the acceptor end of tRNA(Tyr). The sequence is that of Tyrosine--tRNA ligase from Nitratidesulfovibrio vulgaris (strain ATCC 29579 / DSM 644 / CCUG 34227 / NCIMB 8303 / VKM B-1760 / Hildenborough) (Desulfovibrio vulgaris).